The primary structure comprises 767 residues: Cilia- and flagella-associated protein 91 (767 aa).

The interval 1–29 (MSHAVTIEEPQAQPQVSQTRYRERSRAGS) is disordered.

It belongs to the CFAP91 family. As to quaternary structure, interacts with MYCBP and AKAP1. Part of a complex containing MYCBP, AKAP1 and PRKAR2B. Interacts with CFAP61. In terms of assembly, does not interact with MYCBP. Phosphorylated by PKA. Strongly expressed in the liver. As to expression, widely expressed, but strongly expressed in all spermatogenesis-related tissues, including the testis, the epithelium of cauda and the corpus epididymis, as well as the spermatid and mature sperm. Also expressed in Leydig cells.

It localises to the mitochondrion. Its subcellular location is the cytoplasm. The protein resides in the cytoskeleton. The protein localises to the cilium axoneme. Functionally, involved in sperm flagellum axonemal organization and function. May regulate cilium motility through its role in the assembly of the axonemal radial spokes. In Homo sapiens (Human), this protein is Cilia- and flagella-associated protein 91.